The primary structure comprises 418 residues: 3-deoxy-D-manno-octulosonic acid transferase (418 aa).

The helical; Signal-anchor transmembrane segment at phenylalanine 7–glycine 27 threads the bilayer. Glutamate 60 serves as the catalytic Proton acceptor. Residues proline 264–arginine 265, phenylalanine 305–glutamate 307, and asparagine 330–glutamate 333 each bind CMP.

Belongs to the glycosyltransferase group 1 family. Glycosyltransferase 30 subfamily.

It localises to the cell inner membrane. It carries out the reaction lipid IVA (E. coli) + CMP-3-deoxy-beta-D-manno-octulosonate = alpha-Kdo-(2-&gt;6)-lipid IVA (E. coli) + CMP + H(+). The protein operates within bacterial outer membrane biogenesis; LPS core biosynthesis. In terms of biological role, involved in lipopolysaccharide (LPS) biosynthesis. Catalyzes the transfer of 3-deoxy-D-manno-octulosonate (Kdo) residue(s) from CMP-Kdo to lipid IV(A), the tetraacyldisaccharide-1,4'-bisphosphate precursor of lipid A. This Rickettsia bellii (strain RML369-C) protein is 3-deoxy-D-manno-octulosonic acid transferase (waaA).